Consider the following 152-residue polypeptide: Transcription elongation factor Spt5 (152 aa).

The region spanning 99-128 (PGDVVEVISGPFRGTQAQVIRVEEAKGEVV) is the KOW domain.

It belongs to the archaeal Spt5 family. Heterodimer composed of Spt4 and Spt5. Interacts with RNA polymerase (RNAP).

Stimulates transcription elongation. This Saccharolobus solfataricus (strain ATCC 35092 / DSM 1617 / JCM 11322 / P2) (Sulfolobus solfataricus) protein is Transcription elongation factor Spt5.